Consider the following 109-residue polypeptide: Large ribosomal subunit protein uL22 (109 aa).

It belongs to the universal ribosomal protein uL22 family. Part of the 50S ribosomal subunit.

In terms of biological role, this protein binds specifically to 23S rRNA; its binding is stimulated by other ribosomal proteins, e.g. L4, L17, and L20. It is important during the early stages of 50S assembly. It makes multiple contacts with different domains of the 23S rRNA in the assembled 50S subunit and ribosome. Its function is as follows. The globular domain of the protein is located near the polypeptide exit tunnel on the outside of the subunit, while an extended beta-hairpin is found that lines the wall of the exit tunnel in the center of the 70S ribosome. The polypeptide is Large ribosomal subunit protein uL22 (Dechloromonas aromatica (strain RCB)).